The chain runs to 62 residues: Conotoxin Tx5.1 (62 aa).

Residues 1–22 (MCCLPVFVILLLLIASAPSVDA) form the signal peptide. The propeptide occupies 23 to 49 (QPKTKDDVPLAPLHDNAKSALQHLNQR). Residue Q60 is modified to Glutamine amide.

It belongs to the conotoxin T superfamily. Contains 2 disulfide bonds that can be either 'C1-C3, C2-C4' or 'C1-C4, C2-C3', since these disulfide connectivities have been observed for conotoxins with cysteine framework V (for examples, see AC P0DQQ7 and AC P81755). As to expression, expressed by the venom duct.

It localises to the secreted. The sequence is that of Conotoxin Tx5.1 from Conus textile (Cloth-of-gold cone).